We begin with the raw amino-acid sequence, 987 residues long: Collagen alpha-1(I) chain (987 aa).

Residues 1-21 show a composition bias toward pro residues; it reads SVPGPMGPSGPRGLPGPPGPG. Positions 1 to 987 are disordered; it reads SVPGPMGPSG…PGPPGPPGPP (987 aa). Residues proline 15, proline 18, proline 20, proline 29, proline 32, proline 35, proline 50, proline 65, proline 71, proline 80, and proline 86 each carry the 4-hydroxyproline modification. The span at 23 to 41 shows a compositional bias: low complexity; the sequence is QGFQGPPGEPGEPGSSGPM. Residues 53–67 are compositionally biased toward basic and acidic residues; sequence NGDDGEAGKPGRPGE. At lysine 89 the chain carries 5-hydroxylysine; alternate. An O-linked (Gal...) hydroxylysine; alternate glycan is attached at lysine 89. At serine 95 the chain carries Phosphoserine. Residues 103 to 119 show a composition bias toward low complexity; it reads DAGPAGPKGEPGSPGEN. Proline 113, proline 116, proline 122, proline 131, proline 137, proline 158, proline 167, proline 170, proline 197, proline 200, proline 212, proline 218, proline 227, proline 233, proline 236, and proline 251 each carry 4-hydroxyproline. Residues 137–155 are compositionally biased toward low complexity; sequence PGASGPAGARGNDGAAGAA. Over residues 157–169 the composition is skewed to pro residues; that stretch reads PPGPTGPAGPPGF. The span at 203-253 shows a compositional bias: low complexity; it reads AGAAGPAGNPGADGQPGAKGANGAPGIAGAPGFPGARGPSGPQGPSGAPGP. Position 254 is a 5-hydroxylysine (lysine 254). 4-hydroxyproline is present on residues proline 260, proline 263, proline 275, proline 284, proline 299, proline 305, proline 314, and proline 320. Residues 309-318 are compositionally biased toward gly residues; it reads GERGGPGSRG. Position 329 is a 5-hydroxylysine (lysine 329). 4-hydroxyproline is present on residues proline 338, proline 347, proline 353, proline 359, proline 368, proline 371, proline 380, proline 389, proline 395, proline 407, proline 416, proline 425, proline 428, proline 446, proline 468, proline 474, proline 480, proline 486, proline 492, proline 504, proline 513, proline 526, proline 532, and proline 541. Positions 362 to 388 are enriched in low complexity; the sequence is KGLTGSPGSPGPDGKTGPPGPAGQDGR. A compositionally biased stretch (low complexity) spans 397–416; the sequence is ARGQAGVMGFPGPKGAAGEP. The segment covering 458–483 has biased composition (low complexity); the sequence is QGPAPGFQGLPGPAGPPGEAGKPGEQ. The residue at position 553 (lysine 553) is a 5-hydroxylysine. Residues proline 559, proline 574, and proline 580 each carry the 4-hydroxyproline modification. Residues 586–600 are compositionally biased toward low complexity; it reads SGPSGPAGPTGARGA. Serine 589 carries the post-translational modification Phosphoserine. Residues proline 601, proline 607, proline 610, proline 619, proline 625, proline 643, proline 652, and proline 661 each carry the 4-hydroxyproline modification. Residues 613-640 are compositionally biased toward low complexity; the sequence is AGFAGPPGADGQPGAKGEPGDAGAKGDA. Over residues 642–654 the composition is skewed to pro residues; sequence PPGPAGPTGPPGP. Lysine 664 carries the post-translational modification 5-hydroxylysine. Over residues 669 to 685 the composition is skewed to low complexity; sequence SAGPPGATGFPGAAGRV. Residues proline 673 and proline 679 each carry the 4-hydroxyproline modification. Position 687 is a 3-hydroxyproline (proline 687). A 4-hydroxyproline mark is found at proline 688, proline 697, proline 700, proline 721, proline 730, proline 738, proline 747, proline 765, proline 774, proline 777, proline 783, proline 798, proline 804, proline 810, proline 819, and proline 825. Positions 714 to 723 are enriched in low complexity; it reads ETGPAGRPGE. The segment covering 735–747 has biased composition (low complexity); the sequence is KGSPGADGPAGAP. Residues 797–807 show a composition bias toward pro residues; it reads PPGPMGPPGLA. Over residues 809-824 the composition is skewed to low complexity; sequence PPGESGREGSPGAEGS. Lysine 834 carries the post-translational modification 5-hydroxylysine. Pro residues predominate over residues 843–858; the sequence is AGPPGAPGAPGAPGPV. A 4-hydroxyproline mark is found at proline 846, proline 849, and proline 852. Over residues 879–893 the composition is skewed to low complexity; sequence AGPAGARGPAGPQGP. Positions 894-905 are enriched in basic and acidic residues; that stretch reads RGDKGETGEQGD. The residue at position 897 (lysine 897) is a 5-hydroxylysine. Residues proline 918, proline 921, proline 939, and proline 954 each carry the 4-hydroxyproline modification. The segment covering 921 to 954 has biased composition (low complexity); the sequence is PGEQGPSGASGPAGPRGPPGSAGSPGKDGLNGLP. Position 959 is a 3-hydroxyproline (proline 959). 4-hydroxyproline is present on proline 960. Pro residues predominate over residues 972-987; sequence VGPPGPPGPPGPPGPP. Proline 974 carries the 3-hydroxyproline modification. Proline 975 is modified (4-hydroxyproline). Residue proline 977 is modified to 3-hydroxyproline. Proline 978 bears the 4-hydroxyproline mark. Proline 980 carries the 3-hydroxyproline modification. 3 positions are modified to 4-hydroxyproline: proline 981, proline 984, and proline 987.

It belongs to the fibrillar collagen family. As to quaternary structure, trimers of one alpha 2(I) and two alpha 1(I) chains. Contains mostly 4-hydroxyproline. Proline residues at the third position of the tripeptide repeating unit (G-X-Y) are hydroxylated in some or all of the chains. Post-translationally, contains 3-hydroxyproline at a few sites. This modification occurs on the first proline residue in the sequence motif Gly-Pro-Hyp, where Hyp is 4-hydroxyproline. In terms of processing, lysine residues at the third position of the tripeptide repeating unit (G-X-Y) are 5-hydroxylated in some or all of the chains. O-glycosylated on hydroxylated lysine residues. The O-linked glycan consists of a Glc-Gal disaccharide. Expressed in bones.

It localises to the secreted. Its subcellular location is the extracellular space. The protein localises to the extracellular matrix. Type I collagen is a member of group I collagen (fibrillar forming collagen). This chain is Collagen alpha-1(I) chain, found in Glossotherium robustum (Ground sloth).